The following is a 285-amino-acid chain: Shikimate dehydrogenase (NADP(+)) (285 aa).

Residues S20–S22 and T67 contribute to the shikimate site. Residue K71 is the Proton acceptor of the active site. Residue E83 participates in NADP(+) binding. N92 and D107 together coordinate shikimate. NADP(+) contacts are provided by residues G132–A136 and L230. Y232 provides a ligand contact to shikimate. G253 provides a ligand contact to NADP(+).

Belongs to the shikimate dehydrogenase family. In terms of assembly, homodimer.

It catalyses the reaction shikimate + NADP(+) = 3-dehydroshikimate + NADPH + H(+). Its pathway is metabolic intermediate biosynthesis; chorismate biosynthesis; chorismate from D-erythrose 4-phosphate and phosphoenolpyruvate: step 4/7. Functionally, involved in the biosynthesis of the chorismate, which leads to the biosynthesis of aromatic amino acids. Catalyzes the reversible NADPH linked reduction of 3-dehydroshikimate (DHSA) to yield shikimate (SA). In Salinibacter ruber (strain DSM 13855 / M31), this protein is Shikimate dehydrogenase (NADP(+)).